Consider the following 323-residue polypeptide: Porphobilinogen deaminase (323 aa).

Cysteine 251 is subject to S-(dipyrrolylmethanemethyl)cysteine.

This sequence belongs to the HMBS family. As to quaternary structure, monomer. Requires dipyrromethane as cofactor.

It carries out the reaction 4 porphobilinogen + H2O = hydroxymethylbilane + 4 NH4(+). Its pathway is porphyrin-containing compound metabolism; protoporphyrin-IX biosynthesis; coproporphyrinogen-III from 5-aminolevulinate: step 2/4. The protein operates within porphyrin-containing compound metabolism; chlorophyll biosynthesis. Functionally, tetrapolymerization of the monopyrrole PBG into the hydroxymethylbilane pre-uroporphyrinogen in several discrete steps. The polypeptide is Porphobilinogen deaminase (hemC) (Nostoc sp. (strain PCC 7120 / SAG 25.82 / UTEX 2576)).